Reading from the N-terminus, the 199-residue chain is Pyridoxal 5'-phosphate synthase subunit PdxT (199 aa).

52–54 (GES) contacts L-glutamine. Residue cysteine 84 is the Nucleophile of the active site. L-glutamine-binding positions include arginine 115 and 143 to 144 (IR). Active-site charge relay system residues include histidine 179 and glutamate 181.

Belongs to the glutaminase PdxT/SNO family. As to quaternary structure, in the presence of PdxS, forms a dodecamer of heterodimers. Only shows activity in the heterodimer.

The enzyme catalyses aldehydo-D-ribose 5-phosphate + D-glyceraldehyde 3-phosphate + L-glutamine = pyridoxal 5'-phosphate + L-glutamate + phosphate + 3 H2O + H(+). It catalyses the reaction L-glutamine + H2O = L-glutamate + NH4(+). The protein operates within cofactor biosynthesis; pyridoxal 5'-phosphate biosynthesis. Its function is as follows. Catalyzes the hydrolysis of glutamine to glutamate and ammonia as part of the biosynthesis of pyridoxal 5'-phosphate. The resulting ammonia molecule is channeled to the active site of PdxS. In Methanosarcina acetivorans (strain ATCC 35395 / DSM 2834 / JCM 12185 / C2A), this protein is Pyridoxal 5'-phosphate synthase subunit PdxT.